Reading from the N-terminus, the 221-residue chain is Lipoprotein-releasing system ATP-binding protein LolD (221 aa).

The 215-residue stretch at 6-220 (LILKNISKHY…YKLKHGLLNI (215 aa)) folds into the ABC transporter domain. Residue 42–49 (GSSGSGKS) participates in ATP binding.

This sequence belongs to the ABC transporter superfamily. Lipoprotein translocase (TC 3.A.1.125) family. The complex is composed of two ATP-binding proteins (LolD) and two transmembrane proteins (LolC and LolE).

It is found in the cell inner membrane. Its function is as follows. Part of the ABC transporter complex LolCDE involved in the translocation of mature outer membrane-directed lipoproteins, from the inner membrane to the periplasmic chaperone, LolA. Responsible for the formation of the LolA-lipoprotein complex in an ATP-dependent manner. The sequence is that of Lipoprotein-releasing system ATP-binding protein LolD from Rickettsia felis (strain ATCC VR-1525 / URRWXCal2) (Rickettsia azadi).